A 1985-amino-acid chain; its full sequence is Treslin (1985 aa).

8 disordered regions span residues 574 to 609, 791 to 858, 894 to 974, 999 to 1033, 1072 to 1156, 1184 to 1243, 1849 to 1875, and 1938 to 1966; these read AQKA…LKPT, EEKS…QPNK, IQET…SIVE, RRNS…RPGS, VYKT…LWGR, VKTP…PSGY, HEDS…QSRS, and FSDG…SPFR. The span at 823–837 shows a compositional bias: basic residues; sequence RSAKKRRSTALARHR. The segment covering 964 to 974 has biased composition (low complexity); that stretch reads SESNSNISIVE. Composition is skewed to polar residues over residues 999–1026 and 1085–1097; these read RRNS…QLQQ and SKNI…QSGN. Residues 1105-1114 show a composition bias toward low complexity; sequence TPYTPRTPSR. Composition is skewed to basic and acidic residues over residues 1144 to 1156 and 1191 to 1200; these read KPEE…LWGR and QRLESKDFRT. Over residues 1201–1224 the composition is skewed to polar residues; sequence PSRTPTRSNNTTPAKQSMQISNTP. Basic and acidic residues predominate over residues 1225–1238; that stretch reads RKSDLKHPQEHESR.

The protein belongs to the treslin family. As to quaternary structure, interacts with topbp1 (via BRCT domains); interaction is cdk2-dependent. Component of the replisome complex. Post-translationally, phosphorylated during interphase. Cdk2 promotes both phosphorylation and formation of a ticrr-topbp1 complex.

The protein resides in the nucleus. In terms of biological role, regulator of DNA replication and S/M and G2/M checkpoints. Regulates the triggering of DNA replication initiation via its interaction with topbp1 by participating in cdk2-mediated loading of cdc45l onto replication origins. Required for the transition from pre-replication complex (pre-RC) to pre-initiation complex (pre-IC). Required to prevent mitotic entry after treatment with ionizing radiation. The protein is Treslin (ticrr) of Xenopus laevis (African clawed frog).